Consider the following 142-residue polypeptide: Transcription antitermination protein NusB (142 aa).

The protein belongs to the NusB family.

Its function is as follows. Involved in transcription antitermination. Required for transcription of ribosomal RNA (rRNA) genes. Binds specifically to the boxA antiterminator sequence of the ribosomal RNA (rrn) operons. This Borrelia garinii subsp. bavariensis (strain ATCC BAA-2496 / DSM 23469 / PBi) (Borreliella bavariensis) protein is Transcription antitermination protein NusB.